The following is a 493-amino-acid chain: Cobyric acid synthase (493 aa).

Residues 252 to 441 (DLKITVIRLP…LHGLLENGPW (190 aa)) form the GATase cobBQ-type domain. Cys333 acts as the Nucleophile in catalysis. His433 is an active-site residue.

It belongs to the CobB/CobQ family. CobQ subfamily.

It participates in cofactor biosynthesis; adenosylcobalamin biosynthesis. Catalyzes amidations at positions B, D, E, and G on adenosylcobyrinic A,C-diamide. NH(2) groups are provided by glutamine, and one molecule of ATP is hydrogenolyzed for each amidation. The sequence is that of Cobyric acid synthase from Thermosynechococcus vestitus (strain NIES-2133 / IAM M-273 / BP-1).